The following is a 352-amino-acid chain: C5a anaphylatoxin chemotactic receptor 1 (352 aa).

Residues 1–38 are Extracellular-facing; sequence MASMNFSPPEYPDYGTATLDPNIFVDESLNTPKLSVPD. Residues Y11 and Y14 each carry the sulfotyrosine modification. A helical membrane pass occupies residues 39 to 65; it reads MIALVIFVMVFLVGVPGNFLVVWVTGF. Residues 66-70 lie on the Cytoplasmic side of the membrane; that stretch reads EVRRT. Residues 71 to 94 traverse the membrane as a helical segment; that stretch reads INAIWFLNLAVADLLSCLALPILF. Over 95–111 the chain is Extracellular; that stretch reads SSIVQQGYWPFGNAACR. C110 and C189 are oxidised to a cystine. The chain crosses the membrane as a helical span at residues 112–133; the sequence is ILPSLILLNMYASILLLTTISA. At 134-154 the chain is on the cytoplasmic side; that stretch reads DRFVLVFNPIWCQNYRGPQLA. The helical transmembrane segment at 155–175 threads the bilayer; sequence WAACSVAWAVALLLTVPSFIF. The Extracellular segment spans residues 176 to 202; that stretch reads RGVHTEYFPFWMTCGVDYSGVGVLVER. The helical transmembrane segment at 203–228 threads the bilayer; the sequence is GVAILRLLMGFLGPLVILSICYTFLL. The Cytoplasmic portion of the chain corresponds to 229-244; the sequence is IRTWSRKATRSTKTLK. A helical membrane pass occupies residues 245–267; the sequence is VVVAVVVSFFVLWLPYQVTGMMM. Topologically, residues 268-284 are extracellular; that stretch reads ALFYKHSESFRRVSRLD. A helical transmembrane segment spans residues 285–305; it reads SLCVAVAYINCCINPIIYVLA. The Cytoplasmic segment spans residues 306–352; it reads AQGFHSRFLKSLPARLRQVLAEESVGRDSKSITLSTVDTPAQKSQGV. A phosphoserine mark is found at S316, S329, S334, S336, and S340.

Belongs to the G-protein coupled receptor 1 family. As to quaternary structure, homodimer. May also form higher-order oligomers. Interacts (when phosphorylated) with ARRB1 and ARRB2; the interaction is associated with internalization of C5aR. Sulfation plays a critical role in the association of C5aR with C5a, but no significant role in the ability of the receptor to transduce a signal and mobilize calcium in response to a small peptide agonist. Post-translationally, phosphorylated on serine residues in response to C5a binding, resulting in internalization of the receptor and short-term desensitization to C5a.

The protein localises to the cell membrane. It is found in the cytoplasmic vesicle. Functionally, receptor for the chemotactic and inflammatory peptide anaphylatoxin C5a. The ligand interacts with at least two sites on the receptor: a high-affinity site on the extracellular N-terminus, and a second site in the transmembrane region which activates downstream signaling events. Receptor activation stimulates chemotaxis, granule enzyme release, intracellular calcium release and superoxide anion production. The protein is C5a anaphylatoxin chemotactic receptor 1 (C5AR1) of Canis lupus familiaris (Dog).